Reading from the N-terminus, the 1034-residue chain is Enteropeptidase (1034 aa).

Residues 1 to 51 constitute a propeptide that is removed on maturation; that stretch reads MGSKRIIPSRHRSLSTYEVMFTALFAILMVLCAGLIAVSWLTIKGSEKDAA. Topologically, residues 2–18 are cytoplasmic; that stretch reads GSKRIIPSRHRSLSTYE. The helical; Signal-anchor for type II membrane protein transmembrane segment at 19–47 threads the bilayer; the sequence is VMFTALFAILMVLCAGLIAVSWLTIKGSE. Topologically, residues 48-1034 are extracellular; it reads KDAALGKSHE…FTEWIQSFLH (987 aa). The region spanning 54–169 is the SEA domain; the sequence is KSHEARGTMK…NSIDITESLE (116 aa). N-linked (GlcNAc...) asparagine glycosylation is found at Asn-116, Asn-147, Asn-170, and Asn-194. In terms of domain architecture, LDL-receptor class A 1 spans 197-238; the sequence is IECLPGSRPCADALKCIAVDLFCDGELNCPDGSDEDSKICAT. 4 cysteine pairs are disulfide-bonded: Cys-199–Cys-212, Cys-206–Cys-225, Cys-219–Cys-236, and Cys-240–Cys-268. One can recognise a CUB 1 domain in the interval 240 to 349; the sequence is CDGKFLLTES…IGFNATYTAF (110 aa). 9 N-linked (GlcNAc...) asparagine glycosylation sites follow: Asn-283, Asn-343, Asn-350, Asn-403, Asn-455, Asn-485, Asn-518, Asn-549, and Asn-645. In terms of domain architecture, MAM spans 357–519; the sequence is DEKINCNFED…ISLTYGICNV (163 aa). Cys-539 and Cys-567 form a disulfide bridge. The region spanning 539-649 is the CUB 2 domain; it reads CGGPFELWEP…GGFKANFTTG (111 aa). The LDL-receptor class A 2 domain occupies 656–694; it reads EPCKEDNFQCENGECVLLVNLCDGFSHCKDGSDEAHCVR. 3 disulfides stabilise this stretch: Cys-658-Cys-670, Cys-665-Cys-683, and Cys-677-Cys-692. Residues 693–786 form the SRCR domain; it reads VRFLNGTANN…LILLQCNHKS (94 aa). Asn-697, Asn-701, Asn-721, Asn-740, and Asn-761 each carry an N-linked (GlcNAc...) asparagine glycan. 6 cysteine pairs are disulfide-bonded: Cys-772-Cys-782, Cys-787-Cys-911, Cys-825-Cys-841, Cys-925-Cys-992, Cys-956-Cys-971, and Cys-982-Cys-1010. Residues 800–1034 enclose the Peptidase S1 domain; that stretch reads IVGGNDSREG…FTEWIQSFLH (235 aa). N-linked (GlcNAc...) asparagine glycosylation is present at Asn-804. His-840 acts as the Charge relay system in catalysis. Asn-863 carries an N-linked (GlcNAc...) asparagine glycan. Asp-891 serves as the catalytic Charge relay system. Residues Asn-902 and Asn-964 are each glycosylated (N-linked (GlcNAc...) asparagine). The active-site Charge relay system is Ser-986.

The protein belongs to the peptidase S1 family. As to quaternary structure, heterotrimer of a catalytic (light) chain, a multidomain (heavy) chain, and a mini chain. Post-translationally, the chains are derived from a single precursor that is cleaved by a trypsin-like protease. The mini chain may be cleaved by elastase.

Its subcellular location is the membrane. The enzyme catalyses Activation of trypsinogen by selective cleavage of 6-Lys-|-Ile-7 bond.. Responsible for initiating activation of pancreatic proteolytic proenzymes (trypsin, chymotrypsin and carboxypeptidase A). It catalyzes the conversion of trypsinogen to trypsin which in turn activates other proenzymes including chymotrypsinogen, procarboxypeptidases, and proelastases. This chain is Enteropeptidase (TMPRSS15), found in Sus scrofa (Pig).